The following is an 835-amino-acid chain: Protein translocase subunit SecA (835 aa).

ATP is bound by residues glutamine 85, 103 to 107, and aspartate 492; that span reads GEGKT. The tract at residues 788–807 is disordered; that stretch reads VQGEAVHPSSDGEEAKKKPV. Zn(2+) is bound by residues cysteine 819, cysteine 821, cysteine 830, and cysteine 831.

The protein belongs to the SecA family. In terms of assembly, monomer and homodimer. Part of the essential Sec protein translocation apparatus which comprises SecA, SecYEG and auxiliary proteins SecDF. Other proteins may also be involved. The cofactor is Zn(2+).

Its subcellular location is the cell membrane. It localises to the cytoplasm. It carries out the reaction ATP + H2O + cellular proteinSide 1 = ADP + phosphate + cellular proteinSide 2.. Part of the Sec protein translocase complex. Interacts with the SecYEG preprotein conducting channel. Has a central role in coupling the hydrolysis of ATP to the transfer of proteins into and across the cell membrane, serving as an ATP-driven molecular motor driving the stepwise translocation of polypeptide chains across the membrane. The polypeptide is Protein translocase subunit SecA (Bacillus cereus (strain ATCC 14579 / DSM 31 / CCUG 7414 / JCM 2152 / NBRC 15305 / NCIMB 9373 / NCTC 2599 / NRRL B-3711)).